The primary structure comprises 392 residues: Transcription factor GATA-4 (392 aa).

The tract at residues 75–113 (SSAYNPGTSHPPVSPRFTFSSSPPITAPSSREVSYSSPL) is disordered. Over residues 91–113 (FTFSSSPPITAPSSREVSYSSPL) the composition is skewed to polar residues. 2 consecutive GATA-type zinc fingers follow at residues 184–208 (CVNC…CNAC) and 238–262 (CANC…CNAC). 2 disordered regions span residues 279–339 (KEGI…HSNS) and 359–392 (MPSL…LVLA). A compositionally biased stretch (basic residues) spans 284–293 (TRKRKPKNLS). Residues 302 to 316 (SGSDSLTPSTSSTNS) are compositionally biased toward low complexity. Residues 364–380 (LSPQNHHSTFNPSPQAN) show a composition bias toward polar residues.

Expressed at high levels in heart, small intestine, stomach, ovary, and liver. Found at much lower levels in lung, spleen, pancreas and skin.

It localises to the nucleus. In terms of biological role, transcriptional activator that binds to the consensus sequence 5'-AGATAG-3'. Associated with cardiac specification and can regulate cardiac-specific transcription during embryogenesis. Activates the expression of cardiac MHC-alpha in vivo. This chain is Transcription factor GATA-4 (gata4), found in Xenopus laevis (African clawed frog).